Here is a 254-residue protein sequence, read N- to C-terminus: Phosphatidylglycerophosphatase B (254 aa).

Residues 2–24 (RSIARRTAVGAALLLVMPVAVWI) form a helical membrane-spanning segment. At 25-54 (SGWRWQPGEQSWLLKAAFWVTETVTQPWGV) the chain is on the periplasmic side. Residues 55 to 66 (ITHLILFGWFLW) form a helical membrane-spanning segment. At 67–71 (CLRFR) the chain is on the cytoplasmic side. A helical membrane pass occupies residues 72–94 (IKAAFVLFAILAAAILVGQGVKS). Over 95-161 (WIKDKVQEPR…QKETGFAFPS (67 aa)) the chain is Periplasmic. The phosphatase sequence motif I stretch occupies residues 97-105 (KDKVQEPRP). The interval 160 to 163 (PSGH) is phosphatase sequence motif II. Residues 162-176 (GHTMFAASWALLAVG) traverse the membrane as a helical segment. The active-site Proton donor; for a subset of substrates is histidine 163. Over 177–182 (LLWPRR) the chain is Cytoplasmic. Residues 183 to 202 (RTLTIAILLVWATGVMGSRL) traverse the membrane as a helical segment. The interval 200 to 211 (SRLLLGMHWPRD) is phosphatase sequence motif III. At 203–208 (LLGMHW) the chain is on the periplasmic side. Histidine 207 serves as the catalytic Nucleophile. The helical transmembrane segment at 209–232 (PRDLVVATLISWALVAVATWLAQR) threads the bilayer. Residues 233 to 254 (ICGPLTPPAEENREIAQREQES) are Cytoplasmic-facing.

Belongs to the PA-phosphatase related phosphoesterase family. Post-translationally, the N-terminus is blocked.

It localises to the cell inner membrane. The protein resides in the cell outer membrane. It catalyses the reaction a 1,2-diacyl-sn-glycero-3-phospho-(1'-sn-glycero-3'-phosphate) + H2O = a 1,2-diacyl-sn-glycero-3-phospho-(1'-sn-glycerol) + phosphate. The enzyme catalyses a 1,2-diacyl-sn-glycerol 3-diphosphate + H2O = a 1,2-diacyl-sn-glycero-3-phosphate + phosphate + H(+). The catalysed reaction is a 1,2-diacyl-sn-glycero-3-phosphate + H2O = a 1,2-diacyl-sn-glycerol + phosphate. It carries out the reaction di-trans,octa-cis-undecaprenyl diphosphate + H2O = di-trans,octa-cis-undecaprenyl phosphate + phosphate + H(+). It participates in phospholipid metabolism; phosphatidylglycerol biosynthesis; phosphatidylglycerol from CDP-diacylglycerol: step 2/2. In terms of biological role, catalyzes the dephosphorylation of diacylglycerol diphosphate (DGPP) to phosphatidate (PA) and the subsequent dephosphorylation of PA to diacylglycerol (DAG). Also has undecaprenyl pyrophosphate phosphatase activity, required for the biosynthesis of the lipid carrier undecaprenyl phosphate. Can also use lysophosphatidic acid (LPA) and phosphatidylglycerophosphate as substrates. The pattern of activities varies according to subcellular location, PGP phosphatase activity is higher in the cytoplasmic membrane, whereas PA and LPA phosphatase activities are higher in the outer membrane. Activity is independent of a divalent cation ion and insensitive to inhibition by N-ethylmaleimide. The sequence is that of Phosphatidylglycerophosphatase B (pgpB) from Escherichia coli O157:H7.